The sequence spans 118 residues: Class II hydrophobin CRP (118 aa).

An N-terminal signal peptide occupies residues 1–22 (MQFSIIAISFLASLAMASPAKR). The disordered stretch occupies residues 20–46 (AKRGGGGGGSGSGSGSGSGSGSGGGST). Residues 22–45 (RGGGGGGSGSGSGSGSGSGSGGGS) show a composition bias toward gly residues. Repeat copies occupy residues 29–30 (SG), 31–32 (SG), 33–34 (SG), 35–36 (SG), 37–38 (SG), 39–40 (SG), and 41–42 (SG). Positions 29–42 (SGSGSGSGSGSGSG) are 7 X 2 AA tandem repeats of S-G. 4 cysteine pairs are disulfide-bonded: Cys51-Cys100, Cys61-Cys91, Cys62-Cys74, and Cys101-Cys112.

This sequence belongs to the cerato-ulmin hydrophobin family. As to quaternary structure, homotetramer. Further self-assembles to form highly ordered films at water-air interfaces through intermolecular interactions.

The protein resides in the secreted. Its subcellular location is the cell wall. Aerial growth, conidiation, and dispersal of filamentous fungi in the environment rely upon a capability of their secreting small amphipathic proteins called hydrophobins (HPBs) with low sequence identity. Class I can self-assemble into an outermost layer of rodlet bundles on aerial cell surfaces, conferring cellular hydrophobicity that supports fungal growth, development and dispersal; whereas Class II form highly ordered films at water-air interfaces through intermolecular interactions but contribute nothing to the rodlet structure. Cryparin is a class II hydrophobin that is the most abundant protein produced by this fungus when grown in liquid culture and that plays an essential role in the fitness of this important plant pathogen by facilitating the eruption of the fungal fruiting bodies through the bark of its host tree. This chain is Class II hydrophobin CRP, found in Cryphonectria parasitica (Chestnut blight fungus).